The sequence spans 426 residues: Formate-dependent phosphoribosylglycinamide formyltransferase (426 aa).

Residues 26–27 (EL) and glutamate 86 each bind N(1)-(5-phospho-beta-D-ribosyl)glycinamide. Residues arginine 118, lysine 158, 197–200 (EEFI), and glutamate 205 each bind ATP. Positions 123–324 (EAIASTGART…EFALHAKAVL (202 aa)) constitute an ATP-grasp domain. 2 residues coordinate Mg(2+): glutamate 279 and glutamate 293. N(1)-(5-phospho-beta-D-ribosyl)glycinamide-binding positions include aspartate 300, lysine 374, and 381 to 382 (RR).

The protein belongs to the PurK/PurT family. In terms of assembly, homodimer.

It catalyses the reaction N(1)-(5-phospho-beta-D-ribosyl)glycinamide + formate + ATP = N(2)-formyl-N(1)-(5-phospho-beta-D-ribosyl)glycinamide + ADP + phosphate + H(+). It functions in the pathway purine metabolism; IMP biosynthesis via de novo pathway; N(2)-formyl-N(1)-(5-phospho-D-ribosyl)glycinamide from N(1)-(5-phospho-D-ribosyl)glycinamide (formate route): step 1/1. Involved in the de novo purine biosynthesis. Catalyzes the transfer of formate to 5-phospho-ribosyl-glycinamide (GAR), producing 5-phospho-ribosyl-N-formylglycinamide (FGAR). Formate is provided by PurU via hydrolysis of 10-formyl-tetrahydrofolate. The sequence is that of Formate-dependent phosphoribosylglycinamide formyltransferase from Methanocella arvoryzae (strain DSM 22066 / NBRC 105507 / MRE50).